A 556-amino-acid polypeptide reads, in one-letter code: MMFCYQCEQTTRSPAGIGCTSEPGTCGKDEATAVLQDILTHLMKGIASMRAGRAMGVADRRTDDFIFYGLFTTLTNVNFTATRFVHLIQEASKRRERIKLLYEEAAREQGKTPEILSGPALFQPADSLEQLLRQAPSVAINADVEHLGSDVIGARALILYGMKGVALIAQHARVLGYQSDEVMPQAEEILDYLASNPTDLDEMLEESLEVGRLNLKVMELLDVANTDSFGAQEITSVRISPIQGKAILVSGHDLHDLKQILEQTKDQGINVYTHGEMLPANAYPLLKAYPHLAGNLGGAWQDQQREFADFPGPIVMTSNCIIEPGRSYKNRIFTLGPVGWPGVRHIDNGDFTPVIQAAKALPGFTADAKEQRITIGFGHHTLLGVADKIVDAVKHGDIRHFFLVGGCDGVSPARNYFTEVADNAPADSVVMTLGCGKYRFNKHEFGDIGGIPRLLDIGQCNDAHSAIRVAGALAEAFNCGVNDLPLSIMLSWFEQKATAIHLSLLALGIKGIKLGPTLPAYLTPTLVQKLQSRFDLDLDLIGEAQADLQAALAHTA.

Cys4, Cys7, Cys19, and Cys26 together coordinate [4Fe-4S] cluster. 8 residues coordinate hybrid [4Fe-2O-2S] cluster: His252, Glu276, Cys320, Cys407, Cys435, Cys460, Glu494, and Lys496. At Cys407 the chain carries Cysteine persulfide.

The protein belongs to the HCP family. The cofactor is [4Fe-4S] cluster. Hybrid [4Fe-2O-2S] cluster serves as cofactor.

It is found in the cytoplasm. It catalyses the reaction A + NH4(+) + H2O = hydroxylamine + AH2 + H(+). Catalyzes the reduction of hydroxylamine to form NH(3) and H(2)O. This chain is Hydroxylamine reductase, found in Acidithiobacillus ferridurans.